Here is a 686-residue protein sequence, read N- to C-terminus: Rhophilin-2 (686 aa).

The region spanning 26-100 (NPLAQTGRSK…LEGLNISVGV (75 aa)) is the REM-1 domain. Residues 46–66 (QILKAVRMRTGAENLLKVATN) are interaction with Rho. Residues 111 to 460 (PLIPLGLKET…RLKYAQHQDD (350 aa)) enclose the BRO1 domain. Residues 515–593 (RSIHFTAEEG…DGVEMKVVSL (79 aa)) enclose the PDZ domain. Residue threonine 655 is modified to Phosphothreonine.

Belongs to the RHPN family. As to quaternary structure, interacts with GTP-bound RhoA and RhoB. Interacts with both GTP- and GDP-bound RhoA. Interacts with KRT18. As to expression, mainly expressed in thyroid.

Its subcellular location is the cytoplasm. The protein resides in the perinuclear region. Functionally, binds specifically to GTP-Rho. May function in a Rho pathway to limit stress fiber formation and/or increase the turnover of F-actin structures in the absence of high levels of RhoA activity. The sequence is that of Rhophilin-2 (RHPN2) from Canis lupus familiaris (Dog).